Consider the following 294-residue polypeptide: ATP synthase gamma chain (294 aa).

Belongs to the ATPase gamma chain family. In terms of assembly, F-type ATPases have 2 components, CF(1) - the catalytic core - and CF(0) - the membrane proton channel. CF(1) has five subunits: alpha(3), beta(3), gamma(1), delta(1), epsilon(1). CF(0) has three main subunits: a, b and c.

It is found in the cell inner membrane. Functionally, produces ATP from ADP in the presence of a proton gradient across the membrane. The gamma chain is believed to be important in regulating ATPase activity and the flow of protons through the CF(0) complex. The protein is ATP synthase gamma chain of Rhizobium rhizogenes (strain K84 / ATCC BAA-868) (Agrobacterium radiobacter).